Here is a 347-residue protein sequence, read N- to C-terminus: GMP reductase (347 aa).

108–131 is an NADP(+) binding site; the sequence is ADFEKTKQILDLNPALNFVCIDVA. K(+) is bound by residues Gly-181 and Gly-183. Cys-186 functions as the Thioimidate intermediate in the catalytic mechanism. 216–239 is a binding site for NADP(+); the sequence is IVSDGGCTTPGDVAKAFGGGADFV.

This sequence belongs to the IMPDH/GMPR family. GuaC type 1 subfamily. As to quaternary structure, homotetramer.

It carries out the reaction IMP + NH4(+) + NADP(+) = GMP + NADPH + 2 H(+). Its function is as follows. Catalyzes the irreversible NADPH-dependent deamination of GMP to IMP. It functions in the conversion of nucleobase, nucleoside and nucleotide derivatives of G to A nucleotides, and in maintaining the intracellular balance of A and G nucleotides. The polypeptide is GMP reductase (Escherichia coli O127:H6 (strain E2348/69 / EPEC)).